The following is a 247-amino-acid chain: Serine/threonine-protein phosphatase 2A activator (247 aa).

It belongs to the PTPA-type PPIase family.

The protein resides in the cytoplasm. It carries out the reaction [protein]-peptidylproline (omega=180) = [protein]-peptidylproline (omega=0). Its function is as follows. PPIases accelerate the folding of proteins. It catalyzes the cis-trans isomerization of proline imidic peptide bonds in oligopeptides. Acts as a regulatory subunit for PP2A-like phosphatases modulating their activity or substrate specificity, probably by inducing a conformational change in the catalytic subunit, a direct target of the PPIase. Can reactivate inactive phosphatase PP2A-phosphatase methylesterase complexes (PP2Ai) in presence of ATP and Mg(2+) by dissociating the inactive form from the complex. The chain is Serine/threonine-protein phosphatase 2A activator from Encephalitozoon cuniculi (strain GB-M1) (Microsporidian parasite).